Here is a 308-residue protein sequence, read N- to C-terminus: Spermidine synthase 1 (308 aa).

Residues P17–T254 form the PABS domain. S-adenosyl 3-(methylsulfanyl)propylamine is bound at residue Q48. Residue Y78 participates in putrescine binding. S-adenosyl 3-(methylsulfanyl)propylamine-binding positions include Q79, D103, E123, D154–G155, and D173. The active-site Proton acceptor is D173. Residues D173–D176 and Y242 each bind putrescine.

Belongs to the spermidine/spermine synthase family.

It catalyses the reaction S-adenosyl 3-(methylsulfanyl)propylamine + putrescine = S-methyl-5'-thioadenosine + spermidine + H(+). It functions in the pathway amine and polyamine biosynthesis; spermidine biosynthesis; spermidine from putrescine: step 1/1. The chain is Spermidine synthase 1 from Datura stramonium (Jimsonweed).